The sequence spans 328 residues: Cytochrome f (328 aa).

The first 44 residues, 1–44, serve as a signal peptide directing secretion; that stretch reads MRNPDTLGLWTKTMVALRRFTVLAIATVSVFLITDLGLPQAASA. Heme-binding residues include Y45, C66, C69, and H70. The helical transmembrane segment at 296-313 threads the bilayer; that stretch reads FLVLFLAGIMLSQILLVL.

This sequence belongs to the cytochrome f family. In terms of assembly, the 4 large subunits of the cytochrome b6-f complex are cytochrome b6, subunit IV (17 kDa polypeptide, PetD), cytochrome f and the Rieske protein, while the 4 small subunits are PetG, PetL, PetM and PetN. The complex functions as a dimer. Heme is required as a cofactor.

Its subcellular location is the cellular thylakoid membrane. In terms of biological role, component of the cytochrome b6-f complex, which mediates electron transfer between photosystem II (PSII) and photosystem I (PSI), cyclic electron flow around PSI, and state transitions. In Synechocystis sp. (strain ATCC 27184 / PCC 6803 / Kazusa), this protein is Cytochrome f (petA).